Reading from the N-terminus, the 183-residue chain is Capsid protein (183 aa).

The tract at residues 143 to 183 is disordered; sequence LPETTVVRRRGRSPRRRTPSPRRRRSKSPRRRRSQSRESQC. Positions 149 to 176 are enriched in basic residues; that stretch reads VRRRGRSPRRRTPSPRRRRSKSPRRRRS. Residues S155, S162, and S170 each carry the phosphoserine; by host modification. The stretch at 155–160 is one 1; half-length repeat; the sequence is SPRRRT. Residues 155-176 are 3 X 7 AA repeats of S-P-R-R-R-[PR]-S; that stretch reads SPRRRTPSPRRRRSKSPRRRRS. The Bipartite nuclear localization signal signature appears at 158 to 175; the sequence is RRTPSPRRRRSKSPRRRR. A run of 2 repeats spans residues 162–168 and 170–176. The tract at residues 177–183 is RNA binding; that stretch reads QSRESQC.

The protein belongs to the orthohepadnavirus core antigen family. Homodimerizes, then multimerizes. Interacts with cytosol exposed regions of viral L glycoprotein present in the reticulum-to-Golgi compartment. Interacts with human FLNB. Phosphorylated form interacts with host importin alpha; this interaction depends on the exposure of the NLS, which itself depends upon genome maturation and/or phosphorylation of the capsid protein. Interacts with host NUP153. In terms of processing, phosphorylated by host SRPK1, SRPK2, and maybe protein kinase C or GAPDH. Phosphorylation is critical for pregenomic RNA packaging. Protein kinase C phosphorylation is stimulated by HBx protein and may play a role in transport of the viral genome to the nucleus at the late step during the viral replication cycle.

It localises to the virion. It is found in the host cytoplasm. Functionally, self assembles to form an icosahedral capsid. Most capsids appear to be large particles with an icosahedral symmetry of T=4 and consist of 240 copies of capsid protein, though a fraction forms smaller T=3 particles consisting of 180 capsid proteins. Entering capsids are transported along microtubules to the nucleus. Phosphorylation of the capsid is thought to induce exposure of nuclear localization signal in the C-terminal portion of the capsid protein that allows binding to the nuclear pore complex via the importin (karyopherin-) alpha and beta. Capsids are imported in intact form through the nuclear pore into the nuclear basket, where it probably binds NUP153. Only capsids that contain the mature viral genome can release the viral DNA and capsid protein into the nucleoplasm. Immature capsids get stuck in the basket. Capsids encapsulate the pre-genomic RNA and the P protein. Pre-genomic RNA is reverse-transcribed into DNA while the capsid is still in the cytoplasm. The capsid can then either be directed to the nucleus, providing more genomes for transcription, or bud through the endoplasmic reticulum to provide new virions. This Homo sapiens (Human) protein is Capsid protein.